The sequence spans 93 residues: Pyrimidine/purine nucleoside phosphorylase (93 aa).

It belongs to the nucleoside phosphorylase PpnP family.

It carries out the reaction a purine D-ribonucleoside + phosphate = a purine nucleobase + alpha-D-ribose 1-phosphate. The catalysed reaction is adenosine + phosphate = alpha-D-ribose 1-phosphate + adenine. The enzyme catalyses cytidine + phosphate = cytosine + alpha-D-ribose 1-phosphate. It catalyses the reaction guanosine + phosphate = alpha-D-ribose 1-phosphate + guanine. It carries out the reaction inosine + phosphate = alpha-D-ribose 1-phosphate + hypoxanthine. The catalysed reaction is thymidine + phosphate = 2-deoxy-alpha-D-ribose 1-phosphate + thymine. The enzyme catalyses uridine + phosphate = alpha-D-ribose 1-phosphate + uracil. It catalyses the reaction xanthosine + phosphate = alpha-D-ribose 1-phosphate + xanthine. Functionally, catalyzes the phosphorolysis of diverse nucleosides, yielding D-ribose 1-phosphate and the respective free bases. Can use uridine, adenosine, guanosine, cytidine, thymidine, inosine and xanthosine as substrates. Also catalyzes the reverse reactions. In Magnetococcus marinus (strain ATCC BAA-1437 / JCM 17883 / MC-1), this protein is Pyrimidine/purine nucleoside phosphorylase.